The sequence spans 178 residues: Caveolin-1 (178 aa).

An N-acetylserine modification is found at S2. At S2 the chain carries Phosphoserine. Positions S2 to V94 are required for homooligomerization. At S2 to S104 the chain is on the cytoplasmic side. The residue at position 5 (K5) is an N6-acetyllysine; alternate. K5 participates in a covalent cross-link: Glycyl lysine isopeptide (Lys-Gly) (interchain with G-Cter in ubiquitin); alternate. Y6 is modified (phosphotyrosine). S9 is modified (phosphoserine). Phosphotyrosine; by ABL1 and INSR is present on Y14. Y25 carries the phosphotyrosine modification. Glycyl lysine isopeptide (Lys-Gly) (interchain with G-Cter in ubiquitin) cross-links involve residues K26, K30, K39, K47, and K57. Residues D82–V94 are interaction with CAVIN3. An intramembrane region (helical) is located at residues T105–L125. The Cytoplasmic segment spans residues H126–I178. Residues V131–Q142 form an interacts with SPRY1, SPRY2, SPRY3 and SPRY4 region. Residues C133, C143, and C156 are each lipidated (S-palmitoyl cysteine). The segment at S149 to F160 is interacts with SPRY1, SPRY2, and SPRY4. The interval F167 to I178 is interacts with SPRY1, SPRY2, SPRY3 and SPRY4.

Belongs to the caveolin family. As to quaternary structure, homooligomer. Interacts (via the N-terminus) with DPP4; the interaction is direct. Forms a stable heterooligomeric complex with CAV2 that targets to lipid rafts and drives caveolae formation. Interacts with BMX, BTK, CTNNB1, CDH1, GLIPR2, JUP, NOSTRIN, SNAP25 and STX1A. Interacts with SLC7A9. Interacts with TGFBR1. Interacts with CTNNB1, CDH1 and JUP. Interacts with PACSIN2; this interaction induces membrane tubulation. Interacts with CAVIN3 (via leucine-zipper domain) in a cholesterol-sensitive manner. Interacts with EHD2 in a cholesterol-dependent manner. Interacts with CAVIN1. Forms a ternary complex with UBXN6 and VCP; mediates CAV1 targeting to lysosomes for degradation. Interacts with ABCG1; this interaction regulates ABCG1-mediated cholesterol efflux. Interacts with NEU3; this interaction enhances NEU3 sialidase activity within caveola. Interacts (via C-terminus) with SPRY1, SPRY2 (via C-terminus), SPRY3, and SPRY4. Interacts with IGFBP5; this interaction allows trafficking of IGFBP5 from the plasma membrane to the nucleus. Post-translationally, the N-terminus of both isoforms are blocked. Phosphorylated at Tyr-14 by ABL1 in response to oxidative stress. In terms of processing, ubiquitinated. Undergo monoubiquitination and multi- and/or polyubiquitination. Monoubiquitination of N-terminal lysines promotes integration in a ternary complex with UBXN6 and VCP which promotes oligomeric CAV1 targeting to lysosomes for degradation. Ubiquitinated by ZNRF1; leading to degradation and modulation of the TLR4-mediated immune response. Adipose tissue, lung, heart, skeletal muscle, stomach, small bowel, kidney, spleen and testis (at protein level).

It localises to the golgi apparatus membrane. The protein resides in the cell membrane. The protein localises to the membrane. It is found in the caveola. Its subcellular location is the membrane raft. It localises to the golgi apparatus. The protein resides in the trans-Golgi network. Its function is as follows. May act as a scaffolding protein within caveolar membranes. Forms a stable heterooligomeric complex with CAV2 that targets to lipid rafts and drives caveolae formation. Mediates the recruitment of CAVIN proteins (CAVIN1/2/3/4) to the caveolae. Interacts directly with G-protein alpha subunits and can functionally regulate their activity. Involved in the costimulatory signal essential for T-cell receptor (TCR)-mediated T-cell activation. Its binding to DPP4 induces T-cell proliferation and NF-kappa-B activation in a T-cell receptor/CD3-dependent manner. Recruits CTNNB1 to caveolar membranes and may regulate CTNNB1-mediated signaling through the Wnt pathway. Negatively regulates TGFB1-mediated activation of SMAD2/3 by mediating the internalization of TGFBR1 from membrane rafts leading to its subsequent degradation. Binds 20(S)-hydroxycholesterol (20(S)-OHC). The polypeptide is Caveolin-1 (Cav1) (Mus musculus (Mouse)).